A 304-amino-acid chain; its full sequence is Acetylglutamate kinase (304 aa).

Substrate is bound by residues 82–83, arginine 104, and asparagine 197; that span reads GG.

This sequence belongs to the acetylglutamate kinase family. ArgB subfamily.

The protein localises to the cytoplasm. It carries out the reaction N-acetyl-L-glutamate + ATP = N-acetyl-L-glutamyl 5-phosphate + ADP. The protein operates within amino-acid biosynthesis; L-arginine biosynthesis; N(2)-acetyl-L-ornithine from L-glutamate: step 2/4. Its function is as follows. Catalyzes the ATP-dependent phosphorylation of N-acetyl-L-glutamate. The protein is Acetylglutamate kinase of Prochlorococcus marinus (strain NATL1A).